The sequence spans 777 residues: Ribosome-releasing factor 2, mitochondrial (777 aa).

In terms of domain architecture, tr-type G spans 68-353; sequence AKIRNIGIMA…AITMYLPSPE (286 aa). GTP contacts are provided by residues 77–84, 141–145, and 195–198; these read AHIDAGKT, DTPGH, and NKMD.

The protein belongs to the TRAFAC class translation factor GTPase superfamily. Classic translation factor GTPase family. EF-G/EF-2 subfamily.

It localises to the mitochondrion. It catalyses the reaction GTP + H2O = GDP + phosphate + H(+). In terms of biological role, mitochondrial GTPase that mediates the disassembly of ribosomes from messenger RNA at the termination of mitochondrial protein biosynthesis. Acts in collaboration with MRRF. GTP hydrolysis follows the ribosome disassembly and probably occurs on the ribosome large subunit. Not involved in the GTP-dependent ribosomal translocation step during translation elongation. This is Ribosome-releasing factor 2, mitochondrial from Bos taurus (Bovine).